The chain runs to 331 residues: Protein RecA (331 aa).

ATP is bound at residue 61–68 (GPESSGKT).

It belongs to the RecA family.

The protein localises to the cytoplasm. Can catalyze the hydrolysis of ATP in the presence of single-stranded DNA, the ATP-dependent uptake of single-stranded DNA by duplex DNA, and the ATP-dependent hybridization of homologous single-stranded DNAs. It interacts with LexA causing its activation and leading to its autocatalytic cleavage. This is Protein RecA from Mycoplasma mobile (strain ATCC 43663 / 163K / NCTC 11711) (Mesomycoplasma mobile).